A 1026-amino-acid chain; its full sequence is Multidrug resistance protein MdtC (1026 aa).

The next 11 membrane-spanning stretches (helical) occupy residues 15–35 (ILIAAAITLCGILGFRLLPVA), 333–353 (EVEETLAISVALVILVVFLFL), 360–380 (LIPAVAVPVSLISTFAAMYLC), 387–407 (LSLMALTIATGFVVDDAIVVL), 431–451 (VGFTVISMSLSLVAVFLPLLL), 463–483 (FAVTLSVAIGISLVVSLTLTP), 528–548 (LVGVVFLGTIALNIWLYIAIP), 853–873 (LILIMAAIATVYIVLGILYES), 897–917 (LFNAPFSLIALIGIMLLIGIV), 953–973 (PIMMTTLAAMFGALPLVLSGG), and 984–1004 (ITIVGGLVMSQLLTLYTTPVV).

The protein belongs to the resistance-nodulation-cell division (RND) (TC 2.A.6) family. MdtC subfamily. In terms of assembly, part of a tripartite efflux system composed of MdtA, MdtB and MdtC. MdtC forms a heteromultimer with MdtB.

It localises to the cell inner membrane. In Salmonella arizonae (strain ATCC BAA-731 / CDC346-86 / RSK2980), this protein is Multidrug resistance protein MdtC.